Reading from the N-terminus, the 506-residue chain is MEYDGRRPYSVLTRNEITVKMKKQINEISDIFFISNSDATVLLMYLRWDSLRVSERLGENKEKLLMDSGLKSVMIDPSPDSSSEISLETDVYEFDGDNDLISMPFCSHKFDSKYWREYLEKNFYYVEKIQTTISCPDQDCRSAVGPDTIEKLTVRDQEMYERYIWRSYIEGNKVLMIKQCPARNCDYVIEFHQENDDDDEYSLNVVCICGHIFCWRCRLESHRPVSCNKASDWLCSATMKISDESFSLYPTKTKTVTCPHCLCSLESDTKMPQFLTCVCRLRFCSRCLRSEEAHKIEAVDSGFCIKTEVGILCEDRWNVCQKLLEQAKSDLEAFEETNIKKPSDLLREQDIMIIREGLMLIVQCRRVLKWCCVYDYFHTEYENSKEYLRYLQGNAIATLQSYSNTLQEQKDIVLAAATYEECTFFRHTIPTATSNIGNYFYDFMKTLQDGLVDVKVKSYNGGTGPFWYCDRCTYANTWEDNECEMCYDDSASLVGEISDLFLNKVS.

The interval 79–308 is TRIAD supradomain; it reads PDSSSEISLE…VDSGFCIKTE (230 aa). The RING-type 1 zinc finger occupies 83–140; the sequence is SEISLETDVYEFDGDNDLISMPFCSHKFDSKYWREYLEKNFYYVEKIQTTISCPDQDC. Cysteine 106, histidine 108, cysteine 135, cysteine 140, cysteine 180, cysteine 185, cysteine 207, cysteine 209, cysteine 214, cysteine 217, histidine 222, cysteine 227, cysteine 258, cysteine 261, cysteine 277, cysteine 279, cysteine 284, cysteine 287, histidine 294, and cysteine 304 together coordinate Zn(2+). The IBR-type zinc-finger motif lies at 158–227; it reads EMYERYIWRS…RLESHRPVSC (70 aa). The RING-type 2; atypical zinc finger occupies 258–287; it reads CPHCLCSLESDTKMPQFLTCVCRLRFCSRC. The RanBP2-type zinc-finger motif lies at 462-492; that stretch reads GTGPFWYCDRCTYANTWEDNECEMCYDDSAS.

This sequence belongs to the RBR family. Ariadne subfamily. Zn(2+) serves as cofactor. In terms of tissue distribution, mostly expressed in closed flowers and, to a lower extent, in pollen.

It carries out the reaction [E2 ubiquitin-conjugating enzyme]-S-ubiquitinyl-L-cysteine + [acceptor protein]-L-lysine = [E2 ubiquitin-conjugating enzyme]-L-cysteine + [acceptor protein]-N(6)-ubiquitinyl-L-lysine.. Its pathway is protein modification; protein ubiquitination. Functionally, might act as an E3 ubiquitin-protein ligase, or as part of E3 complex, which accepts ubiquitin from specific E2 ubiquitin-conjugating enzymes and then transfers it to substrates. Negatively regulates male gametophyte formation and double fertilization. This chain is Probable E3 ubiquitin-protein ligase ARI14, found in Arabidopsis thaliana (Mouse-ear cress).